A 224-amino-acid chain; its full sequence is Ribosomal RNA small subunit methyltransferase G (224 aa).

S-adenosyl-L-methionine contacts are provided by residues Gly-69, Leu-74, 119 to 120 (AE), and Arg-137.

The protein belongs to the methyltransferase superfamily. RNA methyltransferase RsmG family.

It localises to the cytoplasm. Its function is as follows. Specifically methylates the N7 position of guanine in position 518 of 16S rRNA. The sequence is that of Ribosomal RNA small subunit methyltransferase G from Mycobacterium bovis (strain ATCC BAA-935 / AF2122/97).